Reading from the N-terminus, the 484-residue chain is uncharacterized protein (484 aa).

One can recognise an N-acetyltransferase domain in the interval 334–484; it reads IIIRQITDND…ENEWIYEVNL (151 aa).

This is an uncharacterized protein from Methanocaldococcus jannaschii (strain ATCC 43067 / DSM 2661 / JAL-1 / JCM 10045 / NBRC 100440) (Methanococcus jannaschii).